A 329-amino-acid chain; its full sequence is D-alanine--D-alanine ligase (329 aa).

The region spanning 121–327 is the ATP-grasp domain; the sequence is KLWYDALDIP…FSEFLAQCVT (207 aa). An ATP-binding site is contributed by 151 to 206; it reads AFGHWGSIFVKAARQGSSVGCYKVTTEDQIAPAIEAAFGFSEQVLVEQAVKPRELE. Residues Asp-281, Glu-294, and Asn-296 each contribute to the Mg(2+) site.

It belongs to the D-alanine--D-alanine ligase family. Requires Mg(2+) as cofactor. The cofactor is Mn(2+).

Its subcellular location is the cytoplasm. The enzyme catalyses 2 D-alanine + ATP = D-alanyl-D-alanine + ADP + phosphate + H(+). The protein operates within cell wall biogenesis; peptidoglycan biosynthesis. Functionally, cell wall formation. The sequence is that of D-alanine--D-alanine ligase from Vibrio cholerae serotype O1 (strain ATCC 39541 / Classical Ogawa 395 / O395).